A 157-amino-acid polypeptide reads, in one-letter code: Small ribosomal subunit protein uS7 (157 aa).

This sequence belongs to the universal ribosomal protein uS7 family. As to quaternary structure, part of the 30S ribosomal subunit. Contacts proteins S9 and S11.

In terms of biological role, one of the primary rRNA binding proteins, it binds directly to 16S rRNA where it nucleates assembly of the head domain of the 30S subunit. Is located at the subunit interface close to the decoding center, probably blocks exit of the E-site tRNA. In Koribacter versatilis (strain Ellin345), this protein is Small ribosomal subunit protein uS7.